A 259-amino-acid chain; its full sequence is F-box/kelch-repeat protein At2g22050 (259 aa).

A compositionally biased stretch (basic residues) spans 1–12 (MSPSSKKFKKQS). The segment at 1–29 (MSPSSKKFKKQSSSKSVKPPLEDNDPSLP) is disordered. The 49-residue stretch at 28–76 (LPSFTSLPDEIVLDCLQRVPRSYYLNLCRVSKTLRSLVRSPELSRLRTL) folds into the F-box domain. Residues 142–186 (EIYFVGGSFEPMSELWILDTRTGMFRQGPSMKVARTDEASVGVIN) form a Kelch repeat.

The protein is F-box/kelch-repeat protein At2g22050 of Arabidopsis thaliana (Mouse-ear cress).